The primary structure comprises 605 residues: Isocitrate dehydrogenase kinase/phosphatase (605 aa).

Residues 327-333 (APGIKGL) and lysine 348 contribute to the ATP site. Aspartate 383 is an active-site residue.

It belongs to the AceK family.

It localises to the cytoplasm. It catalyses the reaction L-seryl-[isocitrate dehydrogenase] + ATP = O-phospho-L-seryl-[isocitrate dehydrogenase] + ADP + H(+). Its function is as follows. Bifunctional enzyme which can phosphorylate or dephosphorylate isocitrate dehydrogenase (IDH) on a specific serine residue. This is a regulatory mechanism which enables bacteria to bypass the Krebs cycle via the glyoxylate shunt in response to the source of carbon. When bacteria are grown on glucose, IDH is fully active and unphosphorylated, but when grown on acetate or ethanol, the activity of IDH declines drastically concomitant with its phosphorylation. The protein is Isocitrate dehydrogenase kinase/phosphatase of Burkholderia multivorans (strain ATCC 17616 / 249).